Reading from the N-terminus, the 476-residue chain is MSIPRLKSYFTILATVLVLGQAVSAQAAELPDFTQLVEQASPAVVNISTTQKLPDRRVSNSAQMPDLEGLPPMLREFFERGMPQPRSPRGDRQREAQSLGSGFIISADGYILTNNHVIADADEILVRLADRSELKAKLIGTDPRSDVALLKIDGKDLPVLKLGKSQDLKAGQWVVAIGSPFGFDHTVTQGIVSAIGRSLPNENYVPFIQTDVPINPGNSGGPLFNLAGEVVGINSQIYTRSGGFMGVSFAIPIDVAMDVSNQLKTGGKVSRGWLGVVIQEVNKDLAESFGLEKPAGALVAQIQDDGPAAKGGLQVGDVILSLNGQPIVMSADLPHLVGALKAGAKANLEVIRDGKRKNVELTVGAIPEEDKDLSMLPKSGVERSSNRLGVAVVELNDEQKKAFDLKGGVVIKEVQDGPAALIGLQPGDVITHLNNQAITSAKEFTEIAKALPKNRSVSMRVLRQGRASFITFKLAE.

A signal peptide spans 1-27; the sequence is MSIPRLKSYFTILATVLVLGQAVSAQA. Catalysis depends on charge relay system residues histidine 116, aspartate 146, and serine 219. Residues 217–219 and 274–278 contribute to the substrate site; these read GNS and LGVVI. 2 PDZ domains span residues 263–354 and 360–465; these read LKTG…IRDG and ELTV…LRQG.

This sequence belongs to the peptidase S1C family.

The protein resides in the periplasm. The catalysed reaction is Acts on substrates that are at least partially unfolded. The cleavage site P1 residue is normally between a pair of hydrophobic residues, such as Val-|-Val.. In terms of biological role, might be efficient in the degradation of transiently denatured and unfolded proteins which accumulate in the periplasm following stress conditions. This Pseudomonas fluorescens (strain ATCC BAA-477 / NRRL B-23932 / Pf-5) protein is Probable periplasmic serine endoprotease DegP-like (mucD).